The chain runs to 303 residues: 2-dehydropantoate 2-reductase (303 aa).

NADP(+) is bound by residues 7–12, Asn98, and Ala122; that span reads GCGALG. Substrate is bound at residue Asn98. The active-site Proton donor is the Lys176. The substrate site is built by Asn180, Asn184, Asn194, and Ser244. Glu256 contacts NADP(+).

This sequence belongs to the ketopantoate reductase family. In terms of assembly, monomer.

Its subcellular location is the cytoplasm. It catalyses the reaction (R)-pantoate + NADP(+) = 2-dehydropantoate + NADPH + H(+). Its pathway is cofactor biosynthesis; (R)-pantothenate biosynthesis; (R)-pantoate from 3-methyl-2-oxobutanoate: step 2/2. Its function is as follows. Catalyzes the NADPH-dependent reduction of ketopantoate into pantoic acid. This is 2-dehydropantoate 2-reductase (panE) from Shigella flexneri.